The sequence spans 844 residues: Meiosis-specific protein PAIR3 (844 aa).

4 disordered regions span residues 41-389 (TSSV…RERR), 418-506 (KLSS…RFSD), 532-604 (DDLF…QISI), and 616-669 (WLSD…EPEK). Residues 106 to 120 (QPDDNAIEQTGTFSF) are compositionally biased toward polar residues. 2 stretches are compositionally biased toward basic and acidic residues: residues 122-134 (TRREQDSHLDQLD) and 145-164 (RQVESADKNKPNSEMLRMKL). Polar residues-rich tracts occupy residues 191–208 (QPKSQIANGPSSGRQKVF) and 218–229 (TPAQFNSQTANK). Composition is skewed to basic and acidic residues over residues 256–270 (RKKEPTGSTHQDKSG) and 324–363 (AKVEPKKAHCSDRISHKTTQDDMERKVPSKYIPSEKKGEK). Composition is skewed to polar residues over residues 364-382 (TNSFSSLSRTGKTAESCSR) and 420-440 (SSPQLTSFKSKGKCSSISPQQ). Over residues 441-456 (KENDNTHIPEASDRTA) the composition is skewed to basic and acidic residues. Residues 459–473 (NSFNSTPSPAANPSP) show a composition bias toward low complexity. Over residues 545 to 554 (RSRSTSFTSD) the composition is skewed to polar residues. A compositionally biased stretch (basic and acidic residues) spans 616–640 (WLSDVDSPDKSSIEHLGRKSHLKEG). Polar residues predominate over residues 646-661 (QLTSPTHFATSGTQET). Residues 731–765 (VNAGKSKRKRLESTFEEQQEKLRILHEKFKEEVNQ) adopt a coiled-coil conformation.

In terms of tissue distribution, expressed in pollen mother cells and the ovule tissues during meiosis.

The protein localises to the chromosome. It is found in the nucleus. Plays a crucial role in homologous chromosome pairing and synapsis in meiosis. Does not seem required for cytokinesis. Is essential for meiotic bouquet formation, homologous chromosome pairing and normal recombination, and synaptonemal complex (SC) assembly. Required for the proper association of PAIR2 with chromosomes. The protein is Meiosis-specific protein PAIR3 of Oryza sativa subsp. japonica (Rice).